A 213-amino-acid chain; its full sequence is Orotate phosphoribosyltransferase (213 aa).

Residue K26 coordinates 5-phospho-alpha-D-ribose 1-diphosphate. Residue 34–35 participates in orotate binding; sequence FF. 5-phospho-alpha-D-ribose 1-diphosphate-binding positions include 72–73, R99, K100, K103, H105, and 124–132; these read YK and DDVITAGTA. The orotate site is built by T128 and R156.

This sequence belongs to the purine/pyrimidine phosphoribosyltransferase family. PyrE subfamily. As to quaternary structure, homodimer. It depends on Mg(2+) as a cofactor.

It carries out the reaction orotidine 5'-phosphate + diphosphate = orotate + 5-phospho-alpha-D-ribose 1-diphosphate. The protein operates within pyrimidine metabolism; UMP biosynthesis via de novo pathway; UMP from orotate: step 1/2. In terms of biological role, catalyzes the transfer of a ribosyl phosphate group from 5-phosphoribose 1-diphosphate to orotate, leading to the formation of orotidine monophosphate (OMP). The chain is Orotate phosphoribosyltransferase from Pseudomonas putida (strain W619).